We begin with the raw amino-acid sequence, 571 residues long: Urease subunit alpha (571 aa).

One can recognise a Urease domain in the interval 131–571; sequence GGIDAHIHFI…LPMAQRYFLF (441 aa). Residues histidine 136, histidine 138, and lysine 219 each coordinate Ni(2+). At lysine 219 the chain carries N6-carboxylysine. Histidine 221 serves as a coordination point for substrate. Residues histidine 248 and histidine 274 each contribute to the Ni(2+) site. Histidine 322 (proton donor) is an active-site residue. Aspartate 362 is a Ni(2+) binding site.

The protein belongs to the metallo-dependent hydrolases superfamily. Urease alpha subunit family. In terms of assembly, heterotrimer of UreA (gamma), UreB (beta) and UreC (alpha) subunits. Three heterotrimers associate to form the active enzyme. It depends on Ni cation as a cofactor. In terms of processing, carboxylation allows a single lysine to coordinate two nickel ions.

The protein resides in the cytoplasm. The enzyme catalyses urea + 2 H2O + H(+) = hydrogencarbonate + 2 NH4(+). The protein operates within nitrogen metabolism; urea degradation; CO(2) and NH(3) from urea (urease route): step 1/1. This is Urease subunit alpha from Nostoc punctiforme (strain ATCC 29133 / PCC 73102).